Consider the following 233-residue polypeptide: 2,3-bisphosphoglycerate-dependent phosphoglycerate mutase (233 aa).

Substrate contacts are provided by residues 8 to 15 (RHGQSLWN), 21 to 22 (TG), Arg-60, 116 to 119 (ERYY), Lys-127, 143 to 144 (RR), and 187 to 188 (GN). His-9 functions as the Tele-phosphohistidine intermediate in the catalytic mechanism. The active-site Proton donor/acceptor is Glu-116.

Belongs to the phosphoglycerate mutase family. BPG-dependent PGAM subfamily.

The catalysed reaction is (2R)-2-phosphoglycerate = (2R)-3-phosphoglycerate. Its pathway is carbohydrate degradation; glycolysis; pyruvate from D-glyceraldehyde 3-phosphate: step 3/5. Functionally, catalyzes the interconversion of 2-phosphoglycerate and 3-phosphoglycerate. This is 2,3-bisphosphoglycerate-dependent phosphoglycerate mutase from Gloeothece citriformis (strain PCC 7424) (Cyanothece sp. (strain PCC 7424)).